Here is a 529-residue protein sequence, read N- to C-terminus: UDP-glucuronosyltransferase 2B7 (529 aa).

The N-terminal stretch at 1–23 (MSVKWTSVILLIQLSFCFSSGNC) is a signal peptide. 3 N-linked (GlcNAc...) asparagine glycosylation sites follow: Asn-67, Asn-68, and Asn-315. Residues 373-379 (THGGANG) and Asp-398 each bind UDP-alpha-D-glucuronate. The chain crosses the membrane as a helical span at residues 493-509 (VIGFLLVCVATVIFIVT).

Belongs to the UDP-glycosyltransferase family.

The protein resides in the endoplasmic reticulum membrane. It catalyses the reaction glucuronate acceptor + UDP-alpha-D-glucuronate = acceptor beta-D-glucuronoside + UDP + H(+). The enzyme catalyses 17alpha-estradiol + UDP-alpha-D-glucuronate = 17alpha-estradiol 17-O-(beta-D-glucuronate) + UDP + H(+). It carries out the reaction 17beta-estradiol + UDP-alpha-D-glucuronate = 17beta-estradiol 17-O-(beta-D-glucuronate) + UDP + H(+). The catalysed reaction is 2-hydroxy-17beta-estradiol + UDP-alpha-D-glucuronate = 2-hydroxy-17beta-estradiol 3-O-(beta-D-glucuronate) + UDP + H(+). It catalyses the reaction 4-hydroxy-17beta-estradiol + UDP-alpha-D-glucuronate = 17beta-estradiol 4-O-(beta-D-glucuronate) + UDP + H(+). The enzyme catalyses 4-hydroxyestrone + UDP-alpha-D-glucuronate = estrone 4-O-(beta-D-glucuronate) + UDP + H(+). It carries out the reaction 16alpha-hydroxyestrone + UDP-alpha-D-glucuronate = 16alpha-hydroxyestrone 16-O-(beta-D-glucuronate) + UDP + H(+). The catalysed reaction is 16alpha,17beta-estriol + UDP-alpha-D-glucuronate = 16alpha,17beta-estriol 16-O-(beta-D-glucuronate) + UDP + H(+). It catalyses the reaction 16beta,17beta-estriol + UDP-alpha-D-glucuronate = 16beta,17beta-estriol 16-O-(beta-D-glucuronate) + UDP + H(+). The enzyme catalyses 16alpha,17alpha-estriol + UDP-alpha-D-glucuronate = 16alpha,17alpha-estriol 16-O-(beta-D-glucuronate) + UDP + H(+). It carries out the reaction 16alpha,17alpha-estriol + UDP-alpha-D-glucuronate = 16alpha,17alpha-estriol 17-O-(beta-D-glucuronate) + UDP + H(+). The catalysed reaction is epitestosterone + UDP-alpha-D-glucuronate = epitestosterone 17-O-(beta-D-glucuronate) + UDP + H(+). It catalyses the reaction hyodeoxycholate + UDP-alpha-D-glucuronate = hyodeoxycholate 6-O-(beta-D-glucuronate) + UDP + H(+). The enzyme catalyses hyocholate + UDP-alpha-D-glucuronate = hyocholate 6-O-(beta-D-glucuronate) + UDP + H(+). It carries out the reaction all-trans-retinoate + UDP-alpha-D-glucuronate = all-trans-retinoyl-1-O-(beta-D-glucuronate) + UDP. The catalysed reaction is all-trans-4-hydroxyretinoate + UDP-alpha-D-glucuronate = all-trans-4-hydroxy-4-O-(beta-D-glucuronide)-retinoate + UDP + H(+). It catalyses the reaction (E)-ferulate + UDP-alpha-D-glucuronate = (E)-ferulic acid beta-D-glucuronate ester + UDP. The enzyme catalyses 8-iso-prostaglandin F2alpha + UDP-alpha-D-glucuronate = 8-iso-prostaglandin F2alpha-glucuronide + UDP + H(+). It carries out the reaction 5-epi-5-F2t-IsoP + UDP-alpha-D-glucuronate = 5-epi-5-F2t-IsoP-glucuronide + UDP + H(+). The catalysed reaction is (5Z,8Z,11Z,14Z)-eicosatetraenoate + UDP-alpha-D-glucuronate = O-[(5Z),(8Z),(11Z),(14Z)-eicosatetraenoyl]-beta-D-glucuronate + UDP. It catalyses the reaction 15-hydroxy-(5Z,8Z,11Z,13E)-eicosatetraenoate + UDP-alpha-D-glucuronate = 15-O-(beta-D-glucuronosyl)-(5Z,8Z,11Z,14Z)-eicosatetraenoate + UDP + H(+). The enzyme catalyses 20-hydroxy-(5Z,8Z,11Z,14Z)-eicosatetraenoate + UDP-alpha-D-glucuronate = 20-O-(beta-D-glucuronosyl)-(5Z,8Z,11Z,14Z)-eicosatetraenoate + UDP + H(+). It carries out the reaction (E)-ferulate + UDP-alpha-D-glucuronate = (E)-4-O-(beta-D-glucuronosyl)-ferulate + UDP + H(+). The catalysed reaction is prostaglandin B1 + UDP-alpha-D-glucuronate = 15-O-(beta-D-glucuronosyl)-prostaglandin B1 + UDP + H(+). It catalyses the reaction mycophenolate + UDP-alpha-D-glucuronate = mycophenolic acid O-acyl-beta-D-glucuronide + UDP. The enzyme catalyses losartan + UDP-alpha-D-glucuronate = losartan-2-N-beta-D-glucuronide + UDP. It carries out the reaction candesartan + UDP-alpha-D-glucuronate = candesartan O-beta-D-glucuronoside + UDP. The catalysed reaction is candesartan + UDP-alpha-D-glucuronate = candesartan-2-N-beta-D-glucuronide + UDP. It catalyses the reaction zolasartan + UDP-alpha-D-glucuronate = zolarsartan O-beta-D-glucuronoside + UDP. In terms of biological role, UDP-glucuronosyltransferase (UGT) that catalyzes phase II biotransformation reactions in which lipophilic substrates are conjugated with glucuronic acid to increase the metabolite's water solubility, thereby facilitating excretion into either the urine or bile. Essential for the elimination and detoxification of drugs, xenobiotics and endogenous compounds. Catalyzes the glucuronidation of endogenous steroid hormones such as androgens (epitestosterone, androsterone) and estrogens (estradiol, epiestradiol, estriol, catechol estrogens). Also regulates the levels of retinoic acid, a major metabolite of vitamin A involved in apoptosis, cellular growth and differentiation, and embryonic development. Contributes to bile acid (BA) detoxification by catalyzing the glucuronidation of BA substrates, which are natural detergents for dietary lipids absorption. Involved in the glucuronidation of arachidonic acid (AA) and AA-derived eicosanoids including 15-HETE, 20-HETE, PGE2, PGB1 and F2-isoprostanes (8-iso-PGF2alpha and 5-epi-5-F2t-IsoP). Involved in the glucuronidation of the phytochemical ferulic acid at the phenolic or the carboxylic acid group. Involved in the glucuronidation of the AGTR1 angiotensin receptor antagonist losartan, caderastan and zolarsatan, drugs which can inhibit the effect of angiotensin II. Also metabolizes mycophenolate, an immunosuppressive agent. This is UDP-glucuronosyltransferase 2B7 from Homo sapiens (Human).